The sequence spans 304 residues: Acetyl-coenzyme A carboxylase carboxyl transferase subunit beta (304 aa).

The 270-residue stretch at 23 to 292 (VWTKCDSCGQ…PNPEAPREGV (270 aa)) folds into the CoA carboxyltransferase N-terminal domain. Zn(2+) is bound by residues C27, C30, C46, and C49. The segment at 27–49 (CDSCGQVLYRAELERNLEVCPKC) adopts a C4-type zinc-finger fold. Residues 284–304 (NPEAPREGVVVPPVPDQEPEA) are disordered. Residues 295 to 304 (PPVPDQEPEA) show a composition bias toward pro residues.

Belongs to the AccD/PCCB family. Acetyl-CoA carboxylase is a heterohexamer composed of biotin carboxyl carrier protein (AccB), biotin carboxylase (AccC) and two subunits each of ACCase subunit alpha (AccA) and ACCase subunit beta (AccD). Zn(2+) serves as cofactor.

Its subcellular location is the cytoplasm. It carries out the reaction N(6)-carboxybiotinyl-L-lysyl-[protein] + acetyl-CoA = N(6)-biotinyl-L-lysyl-[protein] + malonyl-CoA. Its pathway is lipid metabolism; malonyl-CoA biosynthesis; malonyl-CoA from acetyl-CoA: step 1/1. Functionally, component of the acetyl coenzyme A carboxylase (ACC) complex. Biotin carboxylase (BC) catalyzes the carboxylation of biotin on its carrier protein (BCCP) and then the CO(2) group is transferred by the transcarboxylase to acetyl-CoA to form malonyl-CoA. In Shigella boydii serotype 18 (strain CDC 3083-94 / BS512), this protein is Acetyl-coenzyme A carboxylase carboxyl transferase subunit beta.